The sequence spans 115 residues: Immunoglobulin kappa variable 5-2 (115 aa).

The N-terminal stretch at 1–20 (MGSQVHLLSFLLLWISDTRA) is a signal peptide. The tract at residues 21–43 (ETTLTQSPAFMSATPGDKVNISC) is framework-1. One can recognise an Ig-like domain in the interval 22–115 (TTLTQSPAFM…YFCLQHDNFP (94 aa)). N-linked (GlcNAc...) asparagine glycosylation is present at Asn40. Phosphoserine is present on Ser42. The cysteines at positions 43 and 108 are disulfide-linked. Residues 44–54 (KASQDIDDDMN) are complementarity-determining-1. The tract at residues 55 to 69 (WYQQKPGEAAIFIIQ) is framework-2. Residues 70 to 76 (EATTLVP) are complementarity-determining-2. Residues 77–108 (GIPPRFSGSGYGTDFTLTINNIESEDAAYYFC) form a framework-3 region. Residues 109 to 115 (LQHDNFP) form a complementarity-determining-3 region.

As to quaternary structure, immunoglobulins are composed of two identical heavy chains and two identical light chains; disulfide-linked.

Its subcellular location is the secreted. The protein resides in the cell membrane. Functionally, v region of the variable domain of immunoglobulin light chains that participates in the antigen recognition. Immunoglobulins, also known as antibodies, are membrane-bound or secreted glycoproteins produced by B lymphocytes. In the recognition phase of humoral immunity, the membrane-bound immunoglobulins serve as receptors which, upon binding of a specific antigen, trigger the clonal expansion and differentiation of B lymphocytes into immunoglobulins-secreting plasma cells. Secreted immunoglobulins mediate the effector phase of humoral immunity, which results in the elimination of bound antigens. The antigen binding site is formed by the variable domain of one heavy chain, together with that of its associated light chain. Thus, each immunoglobulin has two antigen binding sites with remarkable affinity for a particular antigen. The variable domains are assembled by a process called V-(D)-J rearrangement and can then be subjected to somatic hypermutations which, after exposure to antigen and selection, allow affinity maturation for a particular antigen. This is Immunoglobulin kappa variable 5-2 from Homo sapiens (Human).